The sequence spans 369 residues: Peptide chain release factor 2 (369 aa).

The residue at position 251 (Q251) is an N5-methylglutamine.

Belongs to the prokaryotic/mitochondrial release factor family. In terms of processing, methylated by PrmC. Methylation increases the termination efficiency of RF2.

The protein resides in the cytoplasm. Functionally, peptide chain release factor 2 directs the termination of translation in response to the peptide chain termination codons UGA and UAA. The polypeptide is Peptide chain release factor 2 (Acidothermus cellulolyticus (strain ATCC 43068 / DSM 8971 / 11B)).